Reading from the N-terminus, the 346-residue chain is Tetraacyldisaccharide 4'-kinase (346 aa).

53 to 60 (TCGGTGKT) contributes to the ATP binding site.

The protein belongs to the LpxK family.

The enzyme catalyses a lipid A disaccharide + ATP = a lipid IVA + ADP + H(+). It functions in the pathway glycolipid biosynthesis; lipid IV(A) biosynthesis; lipid IV(A) from (3R)-3-hydroxytetradecanoyl-[acyl-carrier-protein] and UDP-N-acetyl-alpha-D-glucosamine: step 6/6. Its function is as follows. Transfers the gamma-phosphate of ATP to the 4'-position of a tetraacyldisaccharide 1-phosphate intermediate (termed DS-1-P) to form tetraacyldisaccharide 1,4'-bis-phosphate (lipid IVA). The sequence is that of Tetraacyldisaccharide 4'-kinase from Bartonella tribocorum (strain CIP 105476 / IBS 506).